The following is a 163-amino-acid chain: ATP synthase subunit b (163 aa).

The propeptide occupies 1–11; the sequence is MLWKANVWVLG. Residues 16–36 form a helical membrane-spanning segment; that stretch reads GISGGTIIYQLLMFIILLALL.

It belongs to the ATPase B chain family. F-type ATPases have 2 components, F(1) - the catalytic core - and F(0) - the membrane proton channel. F(1) has five subunits: alpha(3), beta(3), gamma(1), delta(1), epsilon(1). F(0) has three main subunits: a(1), b(2) and c(10-14). The alpha and beta chains form an alternating ring which encloses part of the gamma chain. F(1) is attached to F(0) by a central stalk formed by the gamma and epsilon chains, while a peripheral stalk is formed by the delta and b chains.

It is found in the cell membrane. Its function is as follows. F(1)F(0) ATP synthase produces ATP from ADP in the presence of a proton or sodium gradient. F-type ATPases consist of two structural domains, F(1) containing the extramembraneous catalytic core and F(0) containing the membrane proton channel, linked together by a central stalk and a peripheral stalk. During catalysis, ATP synthesis in the catalytic domain of F(1) is coupled via a rotary mechanism of the central stalk subunits to proton translocation. Component of the F(0) channel, it forms part of the peripheral stalk, linking F(1) to F(0). The polypeptide is ATP synthase subunit b (Bacillus sp. (strain PS3)).